The sequence spans 148 residues: Snaclec B2 (148 aa).

Residues 1 to 24 (MGRLISVSFGLLVVFLSLSGTGAA) form the signal peptide. 3 cysteine pairs are disulfide-bonded: C27–C38, C55–C144, and C121–C136. Residues 34–145 (YDQHCYKVFD…CRLLGHFVCK (112 aa)) form the C-type lectin domain.

The protein belongs to the snaclec family. Heterodimer; disulfide-linked. As to expression, expressed by the venom gland.

The protein localises to the secreted. Functionally, interferes with one step of hemostasis (modulation of platelet aggregation, or coagulation cascade, for example). In Macrovipera lebetinus (Levantine viper), this protein is Snaclec B2.